The sequence spans 237 residues: NAD(P)H-quinone oxidoreductase subunit K (237 aa).

[4Fe-4S] cluster is bound by residues Cys52, Cys53, Cys117, and Cys148.

The protein belongs to the complex I 20 kDa subunit family. In terms of assembly, NDH-1 can be composed of about 15 different subunits; different subcomplexes with different compositions have been identified which probably have different functions. The cofactor is [4Fe-4S] cluster.

The protein resides in the cellular thylakoid membrane. It catalyses the reaction a plastoquinone + NADH + (n+1) H(+)(in) = a plastoquinol + NAD(+) + n H(+)(out). The enzyme catalyses a plastoquinone + NADPH + (n+1) H(+)(in) = a plastoquinol + NADP(+) + n H(+)(out). Its function is as follows. NDH-1 shuttles electrons from an unknown electron donor, via FMN and iron-sulfur (Fe-S) centers, to quinones in the respiratory and/or the photosynthetic chain. The immediate electron acceptor for the enzyme in this species is believed to be plastoquinone. Couples the redox reaction to proton translocation, and thus conserves the redox energy in a proton gradient. Cyanobacterial NDH-1 also plays a role in inorganic carbon-concentration. The protein is NAD(P)H-quinone oxidoreductase subunit K of Thermosynechococcus vestitus (strain NIES-2133 / IAM M-273 / BP-1).